The chain runs to 446 residues: Exodeoxyribonuclease 7 large subunit (446 aa).

The protein belongs to the XseA family. As to quaternary structure, heterooligomer composed of large and small subunits.

The protein resides in the cytoplasm. It catalyses the reaction Exonucleolytic cleavage in either 5'- to 3'- or 3'- to 5'-direction to yield nucleoside 5'-phosphates.. Bidirectionally degrades single-stranded DNA into large acid-insoluble oligonucleotides, which are then degraded further into small acid-soluble oligonucleotides. This is Exodeoxyribonuclease 7 large subunit from Streptococcus pneumoniae serotype 4 (strain ATCC BAA-334 / TIGR4).